Consider the following 317-residue polypeptide: Carbamate kinase (317 aa).

It belongs to the carbamate kinase family. As to quaternary structure, homodimer.

It carries out the reaction hydrogencarbonate + NH4(+) + ATP = carbamoyl phosphate + ADP + H2O + H(+). It functions in the pathway metabolic intermediate metabolism; carbamoyl phosphate degradation; CO(2) and NH(3) from carbamoyl phosphate: step 1/1. The protein is Carbamate kinase (CBK) of Giardia intestinalis (Giardia lamblia).